Consider the following 224-residue polypeptide: Probable amino-acid permease protein YxeN (224 aa).

The next 6 helical transmembrane spans lie at 3 to 23, 24 to 44, 58 to 78, 91 to 111, 157 to 177, and 190 to 210; these read TIDW…LPIT, LFMA…LALI, LYIS…IYYG, ALTA…AEIF, FIGL…EMFA, and FETY…YSIL. Residues 20 to 211 enclose the ABC transmembrane type-1 domain; sequence LPITLFMAIA…VLTIIYSILQ (192 aa).

This sequence belongs to the binding-protein-dependent transport system permease family. The complex is composed of two ATP-binding proteins (YxeO), two transmembrane proteins (YxeN) and a solute-binding protein (YxeM).

It is found in the cell membrane. Probably part of the ABC transporter complex YxeMNO that could be involved in amino-acid import. May transport S-methylcysteine. Probably responsible for the translocation of the substrate across the membrane. The chain is Probable amino-acid permease protein YxeN (yxeN) from Bacillus subtilis (strain 168).